Consider the following 315-residue polypeptide: Voltage-dependent calcium channel gamma-3 subunit (315 aa).

4 helical membrane-spanning segments follow: residues 8–28, 104–124, 135–155, and 181–201; these read IQML…TIAV, SSVF…CVAA, ILSA…GIIV, and FGAF…HIYI. Position 248 is a phosphoserine (Ser248).

It belongs to the PMP-22/EMP/MP20 family. CACNG subfamily. In terms of assembly, the L-type calcium channel is composed of five subunits: alpha-1, alpha-2/delta, beta and gamma. Acts as an auxiliary subunit for AMPA-selective glutamate receptors (AMPARs). Found in a complex with GRIA1, GRIA2, GRIA3, GRIA4, CNIH2, CNIH3, CACNG2, CACNG4, CACNG5, CACNG7 and CACNG8. Interacts with AP4M1 and GRIA1; associates GRIA1 with the adaptor protein complex 4 (AP-4) to target GRIA1 to the somatodendritic compartment of neurons.

It localises to the membrane. Its function is as follows. Regulates the trafficking to the somatodendritic compartment and gating properties of AMPA-selective glutamate receptors (AMPARs). Promotes their targeting to the cell membrane and synapses and modulates their gating properties by slowing their rates of activation, deactivation and desensitization. Does not show subunit-specific AMPA receptor regulation and regulates all AMPAR subunits. Thought to stabilize the calcium channel in an inactivated (closed) state. This is Voltage-dependent calcium channel gamma-3 subunit (CACNG3) from Homo sapiens (Human).